The sequence spans 592 residues: Aspartate--tRNA ligase (592 aa).

Position 180 (Glu180) interacts with L-aspartate. The aspartate stretch occupies residues 204–207 (QLFK). L-aspartate is bound at residue Arg226. ATP is bound by residues 226-228 (RDE) and Gln235. His455 contacts L-aspartate. ATP is bound at residue Glu489. Arg496 serves as a coordination point for L-aspartate. 541–544 (GFDR) provides a ligand contact to ATP.

Belongs to the class-II aminoacyl-tRNA synthetase family. Type 1 subfamily. As to quaternary structure, homodimer.

The protein localises to the cytoplasm. The enzyme catalyses tRNA(Asp) + L-aspartate + ATP = L-aspartyl-tRNA(Asp) + AMP + diphosphate. In terms of biological role, catalyzes the attachment of L-aspartate to tRNA(Asp) in a two-step reaction: L-aspartate is first activated by ATP to form Asp-AMP and then transferred to the acceptor end of tRNA(Asp). The sequence is that of Aspartate--tRNA ligase from Clostridium tetani (strain Massachusetts / E88).